A 149-amino-acid polypeptide reads, in one-letter code: Protein NrdI (149 aa).

This sequence belongs to the NrdI family.

Probably involved in ribonucleotide reductase function. This chain is Protein NrdI, found in Malacoplasma penetrans (strain HF-2) (Mycoplasma penetrans).